Here is a 344-residue protein sequence, read N- to C-terminus: 4-dimethylallyltryptophan N-methyltransferase easF (344 aa).

The protein belongs to the methyltransferase superfamily. In terms of assembly, homodimer.

It catalyses the reaction 4-(3-methylbut-2-enyl)-L-tryptophan + S-adenosyl-L-methionine = 4-(3-methylbut-2-enyl)-L-abrine + S-adenosyl-L-homocysteine + H(+). Its pathway is alkaloid biosynthesis; ergot alkaloid biosynthesis. In terms of biological role, 4-dimethylallyltryptophan N-methyltransferase; part of the gene cluster that mediates the biosynthesis of fungal ergot alkaloid. DmaW catalyzes the first step of ergot alkaloid biosynthesis by condensing dimethylallyl diphosphate (DMAP) and tryptophan to form 4-dimethylallyl-L-tryptophan. The second step is catalyzed by the methyltransferase easF that methylates 4-dimethylallyl-L-tryptophan in the presence of S-adenosyl-L-methionine, resulting in the formation of 4-dimethylallyl-L-abrine. The catalase easC and the FAD-dependent oxidoreductase easE then transform 4-dimethylallyl-L-abrine to chanoclavine-I which is further oxidized by easD in the presence of NAD(+), resulting in the formation of chanoclavine-I aldehyde. Agroclavine dehydrogenase easG then mediates the conversion of chanoclavine-I aldehyde to agroclavine via a non-enzymatic adduct reaction: the substrate is an iminium intermediate that is formed spontaneously from chanoclavine-I aldehyde in the presence of glutathione. The presence of easA is not required to complete this reaction. Further conversion of agroclavine to paspalic acid is a two-step process involving oxidation of agroclavine to elymoclavine and of elymoclavine to paspalic acid, the second step being performed by the elymoclavine oxidase cloA. Paspalic acid is then further converted to D-lysergic acid. Ergopeptines are assembled from D-lysergic acid and three different amino acids by the D-lysergyl-peptide-synthetases composed each of a monomudular and a trimodular nonribosomal peptide synthetase subunit. LpsB and lpsC encode the monomodular subunits responsible for D-lysergic acid activation and incorporation into the ergopeptine backbone. LpsA1 and A2 subunits encode the trimodular nonribosomal peptide synthetase assembling the tripeptide portion of ergopeptines. LpsA1 is responsible for formation of the major ergopeptine, ergotamine, and lpsA2 for alpha-ergocryptine, the minor ergopeptine of the total alkaloid mixture elaborated by C.purpurea. D-lysergyl-tripeptides are assembled by the nonribosomal peptide synthetases and released as N-(D-lysergyl-aminoacyl)-lactams. Cyclolization of the D-lysergyl-tripeptides is performed by the Fe(2+)/2-ketoglutarate-dependent dioxygenase easH which introduces a hydroxyl group into N-(D-lysergyl-aminoacyl)-lactam at alpha-C of the aminoacyl residue followed by spontaneous condensation with the terminal lactam carbonyl group. The polypeptide is 4-dimethylallyltryptophan N-methyltransferase easF (Claviceps purpurea (Ergot fungus)).